The sequence spans 285 residues: Protoheme IX farnesyltransferase (285 aa).

9 helical membrane passes run 8-28 (ITKP…FLFA), 36-56 (YVLF…ACVF), 80-100 (LLPV…GLSI), 107-127 (FISM…YTMF), 133-153 (FYST…GYTA), 163-183 (ILLF…ISIM), 209-229 (IFFY…LGYL), 232-252 (NFLL…YSNI), and 265-285 (FYFS…DVFF).

The protein belongs to the UbiA prenyltransferase family. Protoheme IX farnesyltransferase subfamily.

It localises to the cell membrane. It catalyses the reaction heme b + (2E,6E)-farnesyl diphosphate + H2O = Fe(II)-heme o + diphosphate. Its pathway is porphyrin-containing compound metabolism; heme O biosynthesis; heme O from protoheme: step 1/1. In terms of biological role, converts heme B (protoheme IX) to heme O by substitution of the vinyl group on carbon 2 of heme B porphyrin ring with a hydroxyethyl farnesyl side group. In Buchnera aphidicola subsp. Acyrthosiphon pisum (strain Tuc7), this protein is Protoheme IX farnesyltransferase.